Here is a 165-residue protein sequence, read N- to C-terminus: uncharacterized protein (165 aa).

In terms of domain architecture, N-acetyltransferase spans 8–159; sequence LLVNYKTLEE…QGVQEQTTKP (152 aa).

This is an uncharacterized protein from Shouchella clausii (strain KSM-K16) (Alkalihalobacillus clausii).